The primary structure comprises 150 residues: 3-dehydroquinate dehydratase (150 aa).

Catalysis depends on tyrosine 26, which acts as the Proton acceptor. The substrate site is built by asparagine 77, histidine 83, and aspartate 90. Histidine 103 acts as the Proton donor in catalysis. Residues 104–105 (LS) and arginine 114 contribute to the substrate site.

It belongs to the type-II 3-dehydroquinase family. Homododecamer.

It carries out the reaction 3-dehydroquinate = 3-dehydroshikimate + H2O. It participates in metabolic intermediate biosynthesis; chorismate biosynthesis; chorismate from D-erythrose 4-phosphate and phosphoenolpyruvate: step 3/7. Functionally, catalyzes a trans-dehydration via an enolate intermediate. The sequence is that of 3-dehydroquinate dehydratase from Histophilus somni (strain 129Pt) (Haemophilus somnus).